Here is a 270-residue protein sequence, read N- to C-terminus: Putative carboxymethylenebutenolidase (270 aa).

Residues Cys-147, Asp-204, and His-236 contribute to the active site.

Belongs to the dienelactone hydrolase family.

The catalysed reaction is 2-(5-oxo-2,5-dihydrofuran-2-ylidene)acetate + H2O = 4-oxohex-2-enedioate + H(+). In Salmonella typhi, this protein is Putative carboxymethylenebutenolidase (ysgA).